The following is a 264-amino-acid chain: tRNA (guanine-N(7)-)-methyltransferase (264 aa).

Residues 1 to 39 (MIHDDDPNAPGAPHDDATAAPASATRAAPAAGDDDDANP) form a disordered region. The segment covering 18-31 (TAAPASATRAAPAA) has biased composition (low complexity). The S-adenosyl-L-methionine site is built by glutamate 94, glutamate 119, aspartate 146, and aspartate 169. Aspartate 169 is an active-site residue. Substrate is bound by residues lysine 173, aspartate 205, and 240-243 (TKFE).

Belongs to the class I-like SAM-binding methyltransferase superfamily. TrmB family.

It catalyses the reaction guanosine(46) in tRNA + S-adenosyl-L-methionine = N(7)-methylguanosine(46) in tRNA + S-adenosyl-L-homocysteine. Its pathway is tRNA modification; N(7)-methylguanine-tRNA biosynthesis. In terms of biological role, catalyzes the formation of N(7)-methylguanine at position 46 (m7G46) in tRNA. In Burkholderia mallei (strain ATCC 23344), this protein is tRNA (guanine-N(7)-)-methyltransferase.